The sequence spans 165 residues: Peptide methionine sulfoxide reductase MsrA (165 aa).

Cys11 is an active-site residue.

This sequence belongs to the MsrA Met sulfoxide reductase family.

The catalysed reaction is L-methionyl-[protein] + [thioredoxin]-disulfide + H2O = L-methionyl-(S)-S-oxide-[protein] + [thioredoxin]-dithiol. It catalyses the reaction [thioredoxin]-disulfide + L-methionine + H2O = L-methionine (S)-S-oxide + [thioredoxin]-dithiol. In terms of biological role, has an important function as a repair enzyme for proteins that have been inactivated by oxidation. Catalyzes the reversible oxidation-reduction of methionine sulfoxide in proteins to methionine. The protein is Peptide methionine sulfoxide reductase MsrA of Ureaplasma parvum serovar 3 (strain ATCC 27815 / 27 / NCTC 11736).